Here is a 492-residue protein sequence, read N- to C-terminus: N-succinylglutamate 5-semialdehyde dehydrogenase (492 aa).

NAD(+) is bound at residue 220–225; sequence GSANTG. Catalysis depends on residues Glu-243 and Cys-277.

This sequence belongs to the aldehyde dehydrogenase family. AstD subfamily.

The catalysed reaction is N-succinyl-L-glutamate 5-semialdehyde + NAD(+) + H2O = N-succinyl-L-glutamate + NADH + 2 H(+). Its pathway is amino-acid degradation; L-arginine degradation via AST pathway; L-glutamate and succinate from L-arginine: step 4/5. Its function is as follows. Catalyzes the NAD-dependent reduction of succinylglutamate semialdehyde into succinylglutamate. The protein is N-succinylglutamate 5-semialdehyde dehydrogenase of Escherichia coli O7:K1 (strain IAI39 / ExPEC).